Reading from the N-terminus, the 512-residue chain is Sucrose transport protein SUC5 (512 aa).

Residues 1–27 form a disordered region; the sequence is MGALEAERAANNATALETQSSPEDLGQ. Over 1-33 the chain is Cytoplasmic; the sequence is MGALEAERAANNATALETQSSPEDLGQPSPLRK. Polar residues predominate over residues 11-22; the sequence is NNATALETQSSP. Ser20 is modified (phosphoserine). The helical transmembrane segment at 34-54 threads the bilayer; that stretch reads IISVASIAAGVQFGWALQLSL. Residues 55-67 are Extracellular-facing; that stretch reads LTPYIQLLGIPHK. The helical transmembrane segment at 68 to 88 threads the bilayer; it reads WSSYMWLCGPISGMIVQPIVG. The Cytoplasmic portion of the chain corresponds to 89 to 102; it reads YHSDRCESRFGRRR. A helical membrane pass occupies residues 103 to 123; that stretch reads PFIAAGVALVAVSVFLIGFAA. The Extracellular segment spans residues 124–140; sequence DMGHSFGDKLENKVRTR. Residues 141–161 form a helical membrane-spanning segment; the sequence is AIIIFLTGFWFLDVANNTLQG. Topologically, residues 162-179 are cytoplasmic; that stretch reads PCRAFLADLAAGDAKKTR. Residues 180–200 form a helical membrane-spanning segment; that stretch reads VANACFSFFMAVGNVLGYAAG. Residues 201–225 lie on the Extracellular side of the membrane; the sequence is SYTNLHKMFPFTMTKACDIYCANLK. Residues 226–246 form a helical membrane-spanning segment; that stretch reads TCFFLSITLLLIVTFSSLWYV. Residues 247–281 lie on the Cytoplasmic side of the membrane; it reads KDKQWSPPQGDKEEKTSSLFFFGEIFGAVRHMKRP. The helical transmembrane segment at 282 to 302 threads the bilayer; that stretch reads MVMLLIVTVINWIAWFPFILY. Residues 303-333 are Extracellular-facing; it reads DTDWMGREVYGGNSDGDERSKKLYDQGVQAG. A helical transmembrane segment spans residues 334-354; sequence ALGLMFNSILLGFVSLGVESI. The Cytoplasmic segment spans residues 355 to 363; sequence GRKMGGAKR. Residues 364 to 384 traverse the membrane as a helical segment; the sequence is LWGCVNFILAIGLAMTVLVTK. Topologically, residues 385–406 are extracellular; that stretch reads SAEHHREIAGPLAGPSSGIKAG. The helical transmembrane segment at 407–427 threads the bilayer; it reads VFSLFTVLGIPLAITYSIPFA. The Cytoplasmic portion of the chain corresponds to 428 to 440; it reads LASIFSTNSGAGQ. The chain crosses the membrane as a helical span at residues 441 to 461; the sequence is GLSLGVLNIAICIPQMIVSFS. Residues 462-473 lie on the Extracellular side of the membrane; the sequence is SGPLDAQFGGGN. The helical transmembrane segment at 474–494 threads the bilayer; sequence LPSFVVGAIAAAVSGVLALTV. Topologically, residues 495–512 are cytoplasmic; sequence LPSPPPDAPAMSGAMGFH.

This sequence belongs to the glycoside-pentoside-hexuronide (GPH) cation symporter transporter (TC 2.A.2.4) family. In terms of tissue distribution, widely expressed. Expressed in the endosperm and on the epidermis of the outer surface of the cotyledons of torpedo-stage or older embryos.

It is found in the cell membrane. The enzyme catalyses sucrose(out) + H(+)(out) = sucrose(in) + H(+)(in). Its pathway is glycan biosynthesis; sucrose metabolism. Its activity is regulated as follows. Inhibited by protonophores (e.g. carbonyl cyanide m-chlorophenyl-hydrazone (CCCP)) and SH group inhibitors (e.g. p-chloromercuribenzene sulphonic acid (PCMBS)). In terms of biological role, responsible in a heterologous system for the transport of sucrose into the cell, with the concomitant uptake of protons (symport system). Can also transport biotin, and probably maltose at a lesser rate. In planta, the role of SUC5 for the transport of sucrose seems to be negligible. Plays a role in the nutrition of the filial tissues during early seed development and is probably involved in the import of biotin into the endosperm and the embryo epidermis. This is Sucrose transport protein SUC5 from Arabidopsis thaliana (Mouse-ear cress).